Reading from the N-terminus, the 528-residue chain is MSKQLEQEIAKRRTFGIISHPDAGKTTLTEKLLLFGGAINMAGAVKSRKIERKATSDWMAIEQERGISVTTSVMKFTYREHEINLLDTPGHQDFSEDTYRVLTAVDSAIMVIDSAKGVEAQTEKLMEVCRMRNTPIITFINKLDREGMHPLDIMADIEDKLQIECAPLSWPIGMGKDFKGVYNIYQKRLHLFTPGTESIDGQGQMIEDLDDPLLDELLGRQAVELREDLELLAGAATPLEYDQYLSATQSPVFFGSAVNNFGVQEMLDAFIDMAPAPGPRMAVSREVLPSEENFSGFVFKIQANMDPAHRDRIAFFRICSGKFTRGMKVHHHRLGKDISLANATIFMAQERANVEEAWPGDIIGIHNHGTIKIGDTFSIKEPLKFTGIPNFAPEHFRRVILKNPLKMKQLQKGLIQLAEEGAIQVFRPIIGADYIMGAVGVLQFEVTMARLKNEYSVDAIYEPISYQAARWVSCEDKKALAEFEKKNQSTLARDSEGFLTHLAQSDWMLNFFMEKWPNIDFHKTRENI.

Residues 10-280 (AKRRTFGIIS…IDMAPAPGPR (271 aa)) enclose the tr-type G domain. GTP contacts are provided by residues 19-26 (SHPDAGKT), 87-91 (DTPGH), and 141-144 (NKLD).

This sequence belongs to the TRAFAC class translation factor GTPase superfamily. Classic translation factor GTPase family. PrfC subfamily.

Its subcellular location is the cytoplasm. Its function is as follows. Increases the formation of ribosomal termination complexes and stimulates activities of RF-1 and RF-2. It binds guanine nucleotides and has strong preference for UGA stop codons. It may interact directly with the ribosome. The stimulation of RF-1 and RF-2 is significantly reduced by GTP and GDP, but not by GMP. The chain is Peptide chain release factor 3 from Desulfotalea psychrophila (strain LSv54 / DSM 12343).